Consider the following 179-residue polypeptide: Adenine phosphoribosyltransferase (179 aa).

The protein belongs to the purine/pyrimidine phosphoribosyltransferase family. As to quaternary structure, homodimer.

Its subcellular location is the cytoplasm. It catalyses the reaction AMP + diphosphate = 5-phospho-alpha-D-ribose 1-diphosphate + adenine. It participates in purine metabolism; AMP biosynthesis via salvage pathway; AMP from adenine: step 1/1. Functionally, catalyzes a salvage reaction resulting in the formation of AMP, that is energically less costly than de novo synthesis. In Actinobacillus pleuropneumoniae serotype 5b (strain L20), this protein is Adenine phosphoribosyltransferase.